The chain runs to 153 residues: MTASKRVAKELDDLSKELPPYLRHLSSDDANVLVWHMLLLPDQLPYRLKAFGLRIDFPREYPLKPPTLRFTTKIYHPNISEDGLVCLPLISTENWKPYTKAYQVLEALNILVSRPNLEEPVRLELADLLTQDPEMFRKKAEEFTLQYGVDRPS.

Residues 2–149 form the UBC core domain; it reads TASKRVAKEL…AEEFTLQYGV (148 aa). C86 (glycyl thioester intermediate) is an active-site residue.

The protein belongs to the ubiquitin-conjugating enzyme family. As to quaternary structure, interacts with RNF19A, RNF19B and RNF144B. Interacts with FLT3 (tyrosine phosphorylated). ISGylated.

It carries out the reaction S-ubiquitinyl-[E1 ubiquitin-activating enzyme]-L-cysteine + [E2 ubiquitin-conjugating enzyme]-L-cysteine = [E1 ubiquitin-activating enzyme]-L-cysteine + S-ubiquitinyl-[E2 ubiquitin-conjugating enzyme]-L-cysteine.. It participates in protein modification; protein ubiquitination. In terms of biological role, catalyzes the covalent attachment of ubiquitin to other proteins. Functions in the E6/E6-AP-induced ubiquitination of p53/TP53. Promotes ubiquitination and subsequent proteasomal degradation of FLT3. The chain is Ubiquitin/ISG15-conjugating enzyme E2 L6 (Ube2l6) from Rattus norvegicus (Rat).